We begin with the raw amino-acid sequence, 234 residues long: Large ribosomal subunit protein uL1 (234 aa).

It belongs to the universal ribosomal protein uL1 family. As to quaternary structure, part of the 50S ribosomal subunit.

Functionally, binds directly to 23S rRNA. The L1 stalk is quite mobile in the ribosome, and is involved in E site tRNA release. Protein L1 is also a translational repressor protein, it controls the translation of the L11 operon by binding to its mRNA. The sequence is that of Large ribosomal subunit protein uL1 from Salmonella gallinarum (strain 287/91 / NCTC 13346).